Consider the following 275-residue polypeptide: NH(3)-dependent NAD(+) synthetase (275 aa).

46 to 53 provides a ligand contact to ATP; that stretch reads GISGGQDS. Aspartate 52 contributes to the Mg(2+) binding site. Arginine 140 is a deamido-NAD(+) binding site. Position 160 (threonine 160) interacts with ATP. Mg(2+) is bound at residue glutamate 165. Residues lysine 173 and aspartate 180 each contribute to the deamido-NAD(+) site. 2 residues coordinate ATP: lysine 189 and threonine 211. 260 to 261 serves as a coordination point for deamido-NAD(+); sequence HK.

The protein belongs to the NAD synthetase family. As to quaternary structure, homodimer.

It catalyses the reaction deamido-NAD(+) + NH4(+) + ATP = AMP + diphosphate + NAD(+) + H(+). It functions in the pathway cofactor biosynthesis; NAD(+) biosynthesis; NAD(+) from deamido-NAD(+) (ammonia route): step 1/1. Functionally, catalyzes the ATP-dependent amidation of deamido-NAD to form NAD. Uses ammonia as a nitrogen source. This chain is NH(3)-dependent NAD(+) synthetase, found in Shigella flexneri serotype 5b (strain 8401).